The chain runs to 265 residues: Mlc titration factor A (265 aa).

Residues His-111, His-148, His-152, and Glu-211 each contribute to the Zn(2+) site.

Belongs to the MtfA family. Interacts with Mlc. Zn(2+) is required as a cofactor.

The protein localises to the cytoplasm. In terms of biological role, involved in the modulation of the activity of the glucose-phosphotransferase system (glucose-PTS). Interacts with the transcriptional repressor Mlc, preventing its interaction with DNA and leading to the modulation of expression of genes regulated by Mlc, including ptsG, which encodes the PTS system glucose-specific EIICB component. Shows zinc-dependent metallopeptidase activity. The sequence is that of Mlc titration factor A from Shigella dysenteriae serotype 1 (strain Sd197).